Consider the following 466-residue polypeptide: Cysteine--tRNA ligase (466 aa).

Position 28 (C28) interacts with Zn(2+). The 'HIGH' region motif lies at 30–40; that stretch reads PTVYNFFHIGN. The Zn(2+) site is built by C208, H233, and E237. A 'KMSKS' region motif is present at residues 265–269; that stretch reads KMSKS. K268 contacts ATP.

The protein belongs to the class-I aminoacyl-tRNA synthetase family. In terms of assembly, monomer. Requires Zn(2+) as cofactor.

The protein localises to the cytoplasm. It carries out the reaction tRNA(Cys) + L-cysteine + ATP = L-cysteinyl-tRNA(Cys) + AMP + diphosphate. The polypeptide is Cysteine--tRNA ligase (Clostridium perfringens (strain 13 / Type A)).